Reading from the N-terminus, the 236-residue chain is Ubiquinone biosynthesis O-methyltransferase (236 aa).

Residues Arg-39, Gly-59, Asp-80, and Met-124 each coordinate S-adenosyl-L-methionine.

The protein belongs to the methyltransferase superfamily. UbiG/COQ3 family.

It catalyses the reaction a 3-demethylubiquinol + S-adenosyl-L-methionine = a ubiquinol + S-adenosyl-L-homocysteine + H(+). It carries out the reaction a 3-(all-trans-polyprenyl)benzene-1,2-diol + S-adenosyl-L-methionine = a 2-methoxy-6-(all-trans-polyprenyl)phenol + S-adenosyl-L-homocysteine + H(+). Its pathway is cofactor biosynthesis; ubiquinone biosynthesis. In terms of biological role, O-methyltransferase that catalyzes the 2 O-methylation steps in the ubiquinone biosynthetic pathway. The polypeptide is Ubiquinone biosynthesis O-methyltransferase (Shewanella pealeana (strain ATCC 700345 / ANG-SQ1)).